Consider the following 853-residue polypeptide: DNA mismatch repair protein MutS (853 aa).

614–621 (GPNMGGKS) contributes to the ATP binding site.

Belongs to the DNA mismatch repair MutS family.

Its function is as follows. This protein is involved in the repair of mismatches in DNA. It is possible that it carries out the mismatch recognition step. This protein has a weak ATPase activity. This is DNA mismatch repair protein MutS from Cronobacter sakazakii (strain ATCC BAA-894) (Enterobacter sakazakii).